The chain runs to 199 residues: Guanylate kinase (199 aa).

The region spanning 20–198 (GKLIILTGPS…ALQAIEVALF (179 aa)) is the Guanylate kinase-like domain. 27-34 (GPSGVGKG) lines the ATP pocket.

This sequence belongs to the guanylate kinase family.

Its subcellular location is the cytoplasm. It carries out the reaction GMP + ATP = GDP + ADP. Functionally, essential for recycling GMP and indirectly, cGMP. In Nostoc sp. (strain PCC 7120 / SAG 25.82 / UTEX 2576), this protein is Guanylate kinase.